Consider the following 150-residue polypeptide: MQVILLEKVANLGVLGDVVKVKDGYARNFLIPTGAARRATEKAVAEFQARRAELEKVQAEKLAAAKAQGDKLAGKTVSISQKAGVDGRLFGSVTNADIAESLKALGFDVVKAQIRLPNGPLKTVGEFPVSVALHTDAVVEITVAVVGEHV.

This sequence belongs to the bacterial ribosomal protein bL9 family.

Its function is as follows. Binds to the 23S rRNA. The chain is Large ribosomal subunit protein bL9 from Leptothrix cholodnii (strain ATCC 51168 / LMG 8142 / SP-6) (Leptothrix discophora (strain SP-6)).